The chain runs to 322 residues: Ferredoxin--NADP reductase (322 aa).

Positions 37, 45, 50, 91, 128, and 290 each coordinate FAD.

It belongs to the ferredoxin--NADP reductase type 2 family. Homodimer. FAD serves as cofactor.

The enzyme catalyses 2 reduced [2Fe-2S]-[ferredoxin] + NADP(+) + H(+) = 2 oxidized [2Fe-2S]-[ferredoxin] + NADPH. The polypeptide is Ferredoxin--NADP reductase (Malacoplasma penetrans (strain HF-2) (Mycoplasma penetrans)).